The primary structure comprises 514 residues: MGSDTSESNNDWKTQLNIPKKDTRPQTDDVLNTKGRSFEDFYLKRELLMGIFEAGFEKPSPIQEEAIPVAIAGKDILARAKNGTGKTAAFVIPTLEKVKPKLNKIQALIMVPTRELALQTSQVVRTLGKHCGISCMVTTGGTNLRDDIMRLNEPVHILVGTPGRVLDLASRRVTDLSECHLFIMDEADKMLSRDFKVLAEQILGFLPERRQLLLFSATFPVTVKEFMVKHLKNPHEINLMDELTLKGISQFYAFVEEKQKLHCLNTLFSKLQINQAIIFCNSTNRVELLAKKITELGFSCYYSHARMKQSERNKVFHEFRQGKVRTLVCSDLLTRGIDIQAVNVVINFDFPKTAETYLHRIGRSGRFGHLGLAINLINWNDRFNLYKIEQELNTEIAPIPSQIDKSLYVAEDSSAVPIPFPLESLPITANAPQQPANAEPLPPQQTQVQFHAPPQQQQQQQQQQQQQQYQQFPNQQQQQYGQPLMPQNYQQQAYPPQPFPSKGFPQQQYTQAPQ.

Polar residues predominate over residues 1-17; it reads MGSDTSESNNDWKTQLN. The disordered stretch occupies residues 1-31; the sequence is MGSDTSESNNDWKTQLNIPKKDTRPQTDDVL. Positions 36-64 match the Q motif motif; that stretch reads RSFEDFYLKRELLMGIFEAGFEKPSPIQE. In terms of domain architecture, Helicase ATP-binding spans 67-237; the sequence is IPVAIAGKDI…VKHLKNPHEI (171 aa). 80–87 is an ATP binding site; it reads AKNGTGKT. Positions 185 to 188 match the DEAD box motif; it reads DEAD. Positions 247–407 constitute a Helicase C-terminal domain; it reads GISQFYAFVE…PIPSQIDKSL (161 aa). The disordered stretch occupies residues 427-514; it reads ITANAPQQPA…PQQQYTQAPQ (88 aa). Residues 429-494 are compositionally biased toward low complexity; it reads ANAPQQPANA…MPQNYQQQAY (66 aa). A compositionally biased stretch (polar residues) spans 504-514; sequence FPQQQYTQAPQ.

The protein belongs to the DEAD box helicase family. DDX6/DHH1 subfamily.

It is found in the cytoplasm. It localises to the P-body. The catalysed reaction is ATP + H2O = ADP + phosphate + H(+). Functionally, ATP-dependent RNA helicase involved in mRNA turnover, and more specifically in mRNA decapping. Is involved in G1/S DNA-damage checkpoint recovery, probably through the regulation of the translational status of a subset of mRNAs. May also have a role in translation and mRNA nuclear export. The protein is ATP-dependent RNA helicase DHH1 (DHH1) of Kluyveromyces lactis (strain ATCC 8585 / CBS 2359 / DSM 70799 / NBRC 1267 / NRRL Y-1140 / WM37) (Yeast).